The sequence spans 217 residues: Urease accessory protein UreG (217 aa).

13–20 (GPVGSGKT) is a binding site for GTP.

This sequence belongs to the SIMIBI class G3E GTPase family. UreG subfamily. In terms of assembly, homodimer. UreD, UreF and UreG form a complex that acts as a GTP-hydrolysis-dependent molecular chaperone, activating the urease apoprotein by helping to assemble the nickel containing metallocenter of UreC. The UreE protein probably delivers the nickel.

The protein localises to the cytoplasm. Its function is as follows. Facilitates the functional incorporation of the urease nickel metallocenter. This process requires GTP hydrolysis, probably effectuated by UreG. In Frankia alni (strain DSM 45986 / CECT 9034 / ACN14a), this protein is Urease accessory protein UreG.